Consider the following 479-residue polypeptide: Sulfate adenylyltransferase subunit 1 (479 aa).

Residues 25 to 239 (KSLLRFLTCG…EVLETVDIQR (215 aa)) enclose the tr-type G domain. Positions 34–41 (GSVDDGKS) are G1. A GTP-binding site is contributed by 34-41 (GSVDDGKS). Positions 92 to 96 (GITID) are G2. The G3 stretch occupies residues 113-116 (DTPG). Residues 113-117 (DTPGH) and 168-171 (NKMD) each bind GTP. The tract at residues 168 to 171 (NKMD) is G4. Residues 206–208 (SAL) are G5.

It belongs to the TRAFAC class translation factor GTPase superfamily. Classic translation factor GTPase family. CysN/NodQ subfamily. Heterodimer composed of CysD, the smaller subunit, and CysN.

The enzyme catalyses sulfate + ATP + H(+) = adenosine 5'-phosphosulfate + diphosphate. Its pathway is sulfur metabolism; hydrogen sulfide biosynthesis; sulfite from sulfate: step 1/3. Functionally, with CysD forms the ATP sulfurylase (ATPS) that catalyzes the adenylation of sulfate producing adenosine 5'-phosphosulfate (APS) and diphosphate, the first enzymatic step in sulfur assimilation pathway. APS synthesis involves the formation of a high-energy phosphoric-sulfuric acid anhydride bond driven by GTP hydrolysis by CysN coupled to ATP hydrolysis by CysD. The polypeptide is Sulfate adenylyltransferase subunit 1 (Salmonella paratyphi B (strain ATCC BAA-1250 / SPB7)).